A 153-amino-acid chain; its full sequence is L-alanine exporter AlaE (153 aa).

4 helical membrane-spanning segments follow: residues 16–36 (VAMV…LSEM), 42–62 (LSSR…YGLY), 86–106 (LFAY…AIGA), and 114–134 (AVGS…YFLE).

The protein belongs to the AlaE exporter family.

The protein localises to the cell inner membrane. Its function is as follows. Exports L-alanine. The chain is L-alanine exporter AlaE from Musicola paradisiaca (strain Ech703) (Dickeya paradisiaca).